Reading from the N-terminus, the 153-residue chain is ORM1-like protein 3 (153 aa).

The interval 1 to 17 (MNVGTAHSEVNPNTRVM) is important for ceramide level-sensing. The Cytoplasmic segment spans residues 1–21 (MNVGTAHSEVNPNTRVMNSRG). 2 helical membrane-spanning segments follow: residues 22–42 (IWLSYVLAIGLLHVVLLSIPF) and 43–63 (VSVPVVWTLTNLIHNLGMYIF). Residues 64–94 (LHTVKGTPFETPDQGKARLLTHWEQMDYGVQ) are Cytoplasmic-facing. Residues 95 to 117 (FTASRKFLTITPIVLYFLTSFYT) form a helical membrane-spanning segment. The Extracellular portion of the chain corresponds to 118–121 (KYDQ). The helical transmembrane segment at 122 to 142 (VHFILNTVSLMSVLIPKLPQL) threads the bilayer. Pro-137 carries the hydroxyproline modification. Over 143–153 (HGVRIFGINKY) the chain is Cytoplasmic.

Belongs to the ORM family. Ceramide-sensitive subunit of the serine palmitoyltransferase (SPT) complex, which is also composed of SPTLC1, SPTLC2/3 and SPTSSA/B. When hydroxylated at Pro-137, ubiquitinated via 'Lys-48'-linkage, leading to proteasomal degradation. In endothelial cells, ORMDL3 proteasomal degradation is controlled by the sphingosine 1-phosphate receptor signaling pathway.

The protein resides in the endoplasmic reticulum membrane. Functionally, plays an essential role in the homeostatic regulation of sphingolipid de novo biosynthesis by modulating the activity of the serine palmitoyltransferase (SPT) in response to ceramide levels. When complexed to SPT, the binding of ceramides to its N-terminus stabilizes a conformation that block SPT substrate entry, hence preventing SPT catalytic activity. Through this mechanism, maintains ceramide levels at sufficient concentrations for the production of complex sphingolipids, but which prevents the accumulation of ceramides to levels that trigger apoptosis. In Rattus norvegicus (Rat), this protein is ORM1-like protein 3 (Ormdl3).